A 62-amino-acid polypeptide reads, in one-letter code: Large ribosomal subunit protein eL24 (62 aa).

4 residues coordinate Zn(2+): Cys-6, Cys-9, Cys-32, and Cys-36. A C4-type zinc finger spans residues 6-36 (CSFCEGTIEPGCGKKYVKKDGSVMHFCSSKC).

Belongs to the eukaryotic ribosomal protein eL24 family. Part of the 50S ribosomal subunit. Forms a cluster with proteins L3 and L14. The cofactor is Zn(2+).

Functionally, binds to the 23S rRNA. This is Large ribosomal subunit protein eL24 from Methanococcus maripaludis (strain C7 / ATCC BAA-1331).